Consider the following 195-residue polypeptide: Dephospho-CoA kinase (195 aa).

The region spanning 3–195 is the DPCK domain; that stretch reads IIGLTGSIAM…FSIIENLLKN (193 aa). 11–16 lines the ATP pocket; sequence AMGKST.

It belongs to the CoaE family.

The protein resides in the cytoplasm. It catalyses the reaction 3'-dephospho-CoA + ATP = ADP + CoA + H(+). Its pathway is cofactor biosynthesis; coenzyme A biosynthesis; CoA from (R)-pantothenate: step 5/5. In terms of biological role, catalyzes the phosphorylation of the 3'-hydroxyl group of dephosphocoenzyme A to form coenzyme A. The polypeptide is Dephospho-CoA kinase (Bartonella quintana (strain Toulouse) (Rochalimaea quintana)).